Consider the following 1277-residue polypeptide: MSEKKEEVKNATVKVTVKLPKEDNHSHNTKHLKKTQSSKNNDISFEIGKESKIQTVLDVLAMIPSSKYLTNVGLKTIEGDSQLSDEMSIKEIVGEKSELKLQLILKPYSAREALKHVITVRDFIGFAQETSDGLSEFAISTGSSFSSLPLGPIKERSKQEEKDEKSDPEEKKNTFKDVTDEEKLKFNEMVHEVFSSFKNSSINKLLTSESNIITPCVRSLSFAPYNPVPPFYRSKGHLFYLQIVTLEGESFYITAIPSGFYVNKSNSTKFDPSPKENTDENAHSSLIYYSLFDLIASRSKKFISHVQAFEKKLSALDSTSYVRPSNTFLHKPWFVSSLPPNNPDYLRLQTAALDTTPERNFNDEFQAIKDLTTSTLQDRIEMERLFSKVVHEFSVTAASGAMSIFYSDFVAMNPESPTRDQIFLKDNIFYSYVSDVSGNYEGKGGDEAAIAASNQDLKTINILNRLHMHEVRYLLTTVVEFAGRRILAQTPVPGLLATMGNKIVKDANTGEEVTEDFVNDINVKYGLDEGLGKIVYDADFDSVLEKKFVKAFHLKKHKVNGTELAFSSQSKGIVGFDKRRYILDLANTYPLDINFARQNFDNIEETGNRYPHRQTLLRPELVEKWWNNKVEKEGVEFEKAYEENLFSYNPDAYQVEGIEDANVDEMSNYLQKEVIPSVIQDYLSGNLSTPYNGEHLADTLHKNGINMRYLGKIIELSQKELDSQIVHYEQNLKAVEQDNKEYEDWEKSYLQKIENMIKERQAKINKLVQEGKEVPKELTEDLKLNDEEIKKPTDGKPVVVAYDELVPLIKISELEIVSRSLKHVLKDLSKDVPVFLVPSLVAYVFNMLVGINYNADPKPEPVDEFYPVNKCSFAKLTRSELLEAVSKQAFLRFRHQLPSNWIEAYMENPFTLIRSVSYKFGIQLLNKEYFFTREQLESYKQSLDKKIRNKFVEPPTTFSLSDLTIIPRVKFSEYTSSVSEEFWAQGASMINEDKQSALTLLAQSITVLEDVNNILHPAVAEKYLSLSAIYNKLALYPEAIAFCRKACTIYERVSGIDSFEMMRALTNLAILEFSNESPYNATVVYNRLAEILKVYELPKIHHPAPTSIFNHLEQLALGVQDTKLAIEVLGQLSSYVVELEGKDSLAYGYTESRLGNLFAALKDFHRALEHITVTQGIFTKQLGMNHTHSAQSRQWVNGLSSLIMDLKQKKQLAQDQMSTTGSNSAGHKKTNHRQKKDDVKPELANKSVDELLTFIEGDSSNSKSKNKTNNKKKHGKK.

Disordered regions lie at residues 19 to 39 (LPKEDNHSHNTKHLKKTQSSK) and 148 to 176 (LPLGPIKERSKQEEKDEKSDPEEKKNTFK). A compositionally biased stretch (basic residues) spans 27–36 (HNTKHLKKTQ). Basic and acidic residues predominate over residues 153–176 (IKERSKQEEKDEKSDPEEKKNTFK). The Clu domain maps to 339-596 (PPNNPDYLRL…NTYPLDINFA (258 aa)). TPR repeat units lie at residues 704-738 (GINMRYLGKIIELSQKELDSQIVHYEQNLKAVEQD), 1020-1053 (AEKYLSLSAIYNKLALYPEAIAFCRKACTIYERV), and 1148-1181 (GYTESRLGNLFAALKDFHRALEHITVTQGIFTKQ). The interval 1212-1277 (LAQDQMSTTG…TNNKKKHGKK (66 aa)) is disordered. Over residues 1235–1249 (KKDDVKPELANKSVD) the composition is skewed to basic and acidic residues. A Phosphoserine modification is found at serine 1247. The span at 1264–1277 (SKNKTNNKKKHGKK) shows a compositional bias: basic residues.

Belongs to the CLU family. May associate with the eukaryotic translation initiation factor 3 (eIF-3) complex. Associates with the 80S ribosome.

The protein resides in the cytoplasm. Its function is as follows. mRNA-binding protein involved in proper cytoplasmic distribution of mitochondria. This Saccharomyces cerevisiae (strain ATCC 204508 / S288c) (Baker's yeast) protein is Clustered mitochondria protein 1.